Here is a 1062-residue protein sequence, read N- to C-terminus: Carbamoyl phosphate synthase large chain (1062 aa).

The carboxyphosphate synthetic domain stretch occupies residues 1-401 (MPKRTDIHKI…AMQKAVRSLE (401 aa)). The ATP site is built by R129, R169, G175, G176, K208, I210, E215, G241, I242, H243, Q284, and E298. An ATP-grasp 1 domain is found at 133-327 (KELCKELGEP…IAKMAAKIAI (195 aa)). Mg(2+) contacts are provided by Q284, E298, and N300. Q284, E298, and N300 together coordinate Mn(2+). The tract at residues 402 to 546 (IDEKDLYSET…YSTYDGENES (145 aa)) is oligomerization domain. The carbamoyl phosphate synthetic domain stretch occupies residues 547–929 (HKSGKKSVIV…ALYKAFAGAK (383 aa)). The 191-residue stretch at 671 to 861 (DQIIKKLKLN…MAQVATRVIM (191 aa)) folds into the ATP-grasp 2 domain. ATP is bound by residues R707, D746, L748, E752, G777, V778, H779, S780, Q820, and E832. Positions 820, 832, and 834 each coordinate Mg(2+). Residues Q820, E832, and N834 each contribute to the Mn(2+) site. An MGS-like domain is found at 930–1062 (MQLPENGNVL…NRSFATDALK (133 aa)). Positions 930-1062 (MQLPENGNVL…NRSFATDALK (133 aa)) are allosteric domain.

This sequence belongs to the CarB family. As to quaternary structure, composed of two chains; the small (or glutamine) chain promotes the hydrolysis of glutamine to ammonia, which is used by the large (or ammonia) chain to synthesize carbamoyl phosphate. Tetramer of heterodimers (alpha,beta)4. Mg(2+) serves as cofactor. It depends on Mn(2+) as a cofactor.

The catalysed reaction is hydrogencarbonate + L-glutamine + 2 ATP + H2O = carbamoyl phosphate + L-glutamate + 2 ADP + phosphate + 2 H(+). The enzyme catalyses hydrogencarbonate + NH4(+) + 2 ATP = carbamoyl phosphate + 2 ADP + phosphate + 2 H(+). It functions in the pathway amino-acid biosynthesis; L-arginine biosynthesis; carbamoyl phosphate from bicarbonate: step 1/1. The protein operates within pyrimidine metabolism; UMP biosynthesis via de novo pathway; (S)-dihydroorotate from bicarbonate: step 1/3. In terms of biological role, large subunit of the glutamine-dependent carbamoyl phosphate synthetase (CPSase). CPSase catalyzes the formation of carbamoyl phosphate from the ammonia moiety of glutamine, carbonate, and phosphate donated by ATP, constituting the first step of 2 biosynthetic pathways, one leading to arginine and/or urea and the other to pyrimidine nucleotides. The large subunit (synthetase) binds the substrates ammonia (free or transferred from glutamine from the small subunit), hydrogencarbonate and ATP and carries out an ATP-coupled ligase reaction, activating hydrogencarbonate by forming carboxy phosphate which reacts with ammonia to form carbamoyl phosphate. The sequence is that of Carbamoyl phosphate synthase large chain from Lactobacillus johnsonii (strain CNCM I-12250 / La1 / NCC 533).